The primary structure comprises 524 residues: Probable aminopeptidase NPEPL1 (524 aa).

Zn(2+) contacts are provided by Lys-260 and Asp-265. Lys-272 is an active-site residue. Residues Asp-283, Asp-342, and Glu-344 each coordinate Zn(2+). Residue Arg-346 is part of the active site.

It belongs to the peptidase M17 family. Zn(2+) serves as cofactor. The cofactor is Mn(2+).

Its function is as follows. Probably catalyzes the removal of unsubstituted N-terminal amino acids from various peptides. The protein is Probable aminopeptidase NPEPL1 (Npepl1) of Mus musculus (Mouse).